Here is a 526-residue protein sequence, read N- to C-terminus: Glutamyl-tRNA(Gln) amidotransferase subunit A, mitochondrial (526 aa).

K76 acts as the Charge relay system in catalysis. Positions 147–166 are disordered; that stretch reads QYREKRKQNSHSENEDSNWL. S171 functions as the Charge relay system in the catalytic mechanism. S195 serves as the catalytic Acyl-ester intermediate.

This sequence belongs to the amidase family. GatA subfamily. Subunit of the heterotrimeric GatCAB amidotransferase (AdT) complex, composed of A (QRSL1), B (GATB) and C (GATC) subunits.

The protein resides in the mitochondrion. It catalyses the reaction L-glutamyl-tRNA(Gln) + L-glutamine + ATP + H2O = L-glutaminyl-tRNA(Gln) + L-glutamate + ADP + phosphate + H(+). Functionally, allows the formation of correctly charged Gln-tRNA(Gln) through the transamidation of misacylated Glu-tRNA(Gln) in the mitochondria. The reaction takes place in the presence of glutamine and ATP through an activated gamma-phospho-Glu-tRNA(Gln). The sequence is that of Glutamyl-tRNA(Gln) amidotransferase subunit A, mitochondrial from Bos taurus (Bovine).